Reading from the N-terminus, the 426-residue chain is Serine hydroxymethyltransferase (426 aa).

(6S)-5,6,7,8-tetrahydrofolate-binding positions include leucine 113 and 117–119 (GHL). Lysine 222 carries the N6-(pyridoxal phosphate)lysine modification. 363–365 (SAF) contacts (6S)-5,6,7,8-tetrahydrofolate.

Belongs to the SHMT family. As to quaternary structure, homodimer. Requires pyridoxal 5'-phosphate as cofactor.

It localises to the cytoplasm. The enzyme catalyses (6R)-5,10-methylene-5,6,7,8-tetrahydrofolate + glycine + H2O = (6S)-5,6,7,8-tetrahydrofolate + L-serine. It participates in one-carbon metabolism; tetrahydrofolate interconversion. The protein operates within amino-acid biosynthesis; glycine biosynthesis; glycine from L-serine: step 1/1. Its function is as follows. Catalyzes the reversible interconversion of serine and glycine with tetrahydrofolate (THF) serving as the one-carbon carrier. This reaction serves as the major source of one-carbon groups required for the biosynthesis of purines, thymidylate, methionine, and other important biomolecules. Also exhibits THF-independent aldolase activity toward beta-hydroxyamino acids, producing glycine and aldehydes, via a retro-aldol mechanism. The protein is Serine hydroxymethyltransferase of Porphyromonas gingivalis (strain ATCC 33277 / DSM 20709 / CIP 103683 / JCM 12257 / NCTC 11834 / 2561).